The primary structure comprises 292 residues: MLRIALPNKGRLSEDTRGLFNDAGLEVRSSGERALTASLGGEFEAIFVRAQDIPEFVADGAADAGVTGWDLVSESGRELTSHLDLGFGRCRLVVAAREDAGVRSLEDLARQAPPMRVATVFPNITRRFFEMAGVPVTVVPVSGAAEIAPHLGIADVVVDLTSTGSTLRVNGLREVETVLRSSAHLITAVAGPRNGDVSRKQEFDDLVTALASVIRARGQRYLMANVPREVLDAVRAVLPGLNGPTVIDIADHSRYVAVHAVVSADTIYRTISQLRALGGEGILVTRIERLIP.

It belongs to the ATP phosphoribosyltransferase family. Long subfamily. Requires Mg(2+) as cofactor.

The protein resides in the cytoplasm. The catalysed reaction is 1-(5-phospho-beta-D-ribosyl)-ATP + diphosphate = 5-phospho-alpha-D-ribose 1-diphosphate + ATP. It participates in amino-acid biosynthesis; L-histidine biosynthesis; L-histidine from 5-phospho-alpha-D-ribose 1-diphosphate: step 1/9. Feedback inhibited by histidine. In terms of biological role, catalyzes the condensation of ATP and 5-phosphoribose 1-diphosphate to form N'-(5'-phosphoribosyl)-ATP (PR-ATP). Has a crucial role in the pathway because the rate of histidine biosynthesis seems to be controlled primarily by regulation of HisG enzymatic activity. The sequence is that of ATP phosphoribosyltransferase from Gemmatimonas aurantiaca (strain DSM 14586 / JCM 11422 / NBRC 100505 / T-27).